A 677-amino-acid polypeptide reads, in one-letter code: Polyunsaturated fatty acid lipoxygenase ALOX8 (677 aa).

The region spanning A2–K125 is the PLAT domain. The Ca(2+) site is built by G15, G17, D39, H40, G42, E44, D86, and A87. The Lipoxygenase domain maps to V126–I677. 4 residues coordinate Fe cation: H374, H379, H554, and I677.

This sequence belongs to the lipoxygenase family. The cofactor is Fe cation. Expressed in epidermis and brain. No expression found in heart, spleen, liver, skeletal muscle, kidney or testis.

It is found in the cytoplasm. It localises to the cytosol. The protein localises to the membrane. The catalysed reaction is (9Z,12Z)-octadecadienoate + O2 = (9S)-hydroperoxy-(10E,12Z)-octadecadienoate. It catalyses the reaction (5Z,8Z,11Z,14Z)-eicosatetraenoate + O2 = (8S)-hydroperoxy-(5Z,9E,11Z,14Z)-eicosatetraenoate. The enzyme catalyses (15S)-hydroperoxy-(5Z,8Z,11Z,13E)-eicosatetraenoate + O2 = (8S,15S)-dihydroperoxy-(5Z,9E,11Z,13E)-eicosatetraenoate. It carries out the reaction (8S)-hydroperoxy-(5Z,9E,11Z,14Z)-eicosatetraenoate + O2 = (8S,15S)-dihydroperoxy-(5Z,9E,11Z,13E)-eicosatetraenoate. The catalysed reaction is 1-octadecanoyl-2-(5Z,8Z,11Z,14Z-eicosatetraenoyl)-sn-glycero-3-phosphocholine + O2 = 1-octadecanoyl-2-(15-hydroperoxy-5Z,8Z,11Z,13E-eicosatetraenoyl)-sn-glycero-3-phosphocholine. It catalyses the reaction a 1-acyl-2-(5Z,8Z,11Z,14Z-eicosatetraenoyl)-sn-glycero-3-phospho-(1D-myo-inositol) + O2 = a 1-acyl-2-(15-hydroperoxy-5Z,8Z,11Z,13E-eicosatetraenoyl)-sn-glycero-3-phospho-(1D-myo-inositol). The enzyme catalyses a 1-acyl-2-(8Z,11Z,14Z-eicosatrienoyl)-sn-glycero-3-phospho-(1D-myo-inositol) + O2 = a 1-acyl-2-(15-hydroperoxy-8Z,11Z,13E-eicosatrienoyl)-sn-glycero-3-phospho-(1D-myo-inositol). It carries out the reaction (5Z,8Z,11Z,14Z)-eicosatetraenoate + O2 = 9-hydroperoxy-(5Z,7E,11Z,14Z)-eicosatetraenoate. The catalysed reaction is (5Z,8Z,11Z,14Z)-eicosatetraenoate + O2 = 11-hydroperoxy-(5Z,8Z,12E,14Z)-eicosatetraenoate. It catalyses the reaction (8Z,11Z,14Z)-eicosatrienoate + O2 = 15-hydroperoxy-(8Z,11Z,13E)-eicosatrienoate. Its pathway is lipid metabolism; hydroperoxy eicosatetraenoic acid biosynthesis. Its function is as follows. Non-heme iron-containing dioxygenase that catalyzes the stereo-specific peroxidation of free and esterified polyunsaturated fatty acids generating a spectrum of bioactive lipid mediators. Catalyzes the peroxidation of arachidonate and linoleate into (8S)-HPETE and (9S)-HPODE respectively. In addition to generate (8S)-HPETE from free arachidonic acid (AA), may produce other HETE isomers from phospholipid-esterified polyunsaturated fatty acids and minor products derived from (8S)-HPETE itself that may include leukotriene A4 and 8,15-diHPETE. With free arachidonate as substrate, has no detectable 15S-lipoxygenase activity and only displays a 8S-lipoxygenase activity. However may have a 15S-lipoxygenase activity with (8S)-HPETE to produce (8S,15S)-diHPETE and when oxidizes directly arachidonic acid esterified to membrane-bound phospholipids to produce a phospholipid-esterified 15-HpETE. May also catalyze (15S)-HPETE peroxidation to produce 8,15-diHPETE. May play a role in keratinocyte differentiation through activation of the peroxisome proliferator activated receptor signaling pathway. In Mus musculus (Mouse), this protein is Polyunsaturated fatty acid lipoxygenase ALOX8.